Here is a 991-residue protein sequence, read N- to C-terminus: MSQFTSSYDPTSFEARLYAEWEAAGHFKPSGTGQPYTILLPPPNVTGTLHMGHAFQQTLMDALVRYHRMCGDDTLWQVGTDHAGIATEMVVSRNVMLEGRGETRDSLGRDGFINKVWEWKQQSGDTIERQMRRLGVSADWSRSTFTMDPQPSAAVTEAFVRWYEEGLIYRGQRLVNWDPVLKTAISDLEVENVAEEGMLWSIRYPLSDGVTYEHIEHDAAGNEILRETRDSLIVATTRPETLLGDTAVMVHPEDRRYTALIGKTVTLPLTGRQVEVISDTCVDPTFGSGVVKVTPAHDFNDFEVGVRHQLPMIKVLDDAACILSETYAQGWMTPLNNPKGDSRWINIIDIPESEFVIPAHLAGLDRYEARKQILADLDTQGLLVAAIPHTLQVPRGDRTGQVIEPYLTAQWFVRMDRLAARGLELVERGAVRFVPPNWINTYRHWMNNIRDWCISRQLWWGHRIPAWFDEYDGSFYVGRSEAEVRAKHALGPEVTLTQDSNVLETWFSSQLWPFSTLGWPDPTAMAERGFERYLPSSVLVTGFDIIFFWVARMIMATDHFTGNVPFHDVYITGLIRDAQGQKMSKSKGNVLDPLDIIDGITLDDLVAKRTTGLMQPKLAEKIAKATRKEFPDGIAPHGADALRFTIAALATHGRDIKFDLGRAEGYKNFCNKLWNATRFVLMNTADDTAHSPAQHQAGQDGQDAPRTPQPRTDAEQWILSRLAAVTAEAHAQFAAYRFDLLAQALYEFAWNEFCDWFVELAKPALNGNDTQAAASTRHTLLYVLETLLRLLHPLIPFITEELWRQVAPRLGIQATTLMLRPYPQPQQLETAAFANAAADVEWLKIMVSALRRIRSTLNVPPSRRISLLLQGGQEVDRHRITHFAIALHFLLKLEHIDWLSAATAAPPSAIAIVGSLKLLVPLEGLIDVDAERARLDKEIKRVESEIDKSNGKLSNAVFVQNAPTAVVEQERSRLTEWTTQLNGLRERRTTL.

The 'HIGH' region motif lies at 43-53 (PNVTGTLHMGH). Positions 582–586 (KMSKS) match the 'KMSKS' region motif. Residue Lys-585 participates in ATP binding. A disordered region spans residues 689 to 711 (AHSPAQHQAGQDGQDAPRTPQPR). A compositionally biased stretch (low complexity) spans 693–704 (AQHQAGQDGQDA). A coiled-coil region spans residues 925–988 (LIDVDAERAR…TQLNGLRERR (64 aa)).

It belongs to the class-I aminoacyl-tRNA synthetase family. ValS type 1 subfamily. Monomer.

The protein resides in the cytoplasm. It carries out the reaction tRNA(Val) + L-valine + ATP = L-valyl-tRNA(Val) + AMP + diphosphate. In terms of biological role, catalyzes the attachment of valine to tRNA(Val). As ValRS can inadvertently accommodate and process structurally similar amino acids such as threonine, to avoid such errors, it has a 'posttransfer' editing activity that hydrolyzes mischarged Thr-tRNA(Val) in a tRNA-dependent manner. The chain is Valine--tRNA ligase from Xylella fastidiosa (strain M12).